Here is a 106-residue protein sequence, read N- to C-terminus: Small ribosomal subunit protein uS10 (106 aa).

The protein belongs to the universal ribosomal protein uS10 family. Part of the 30S ribosomal subunit.

Its function is as follows. Involved in the binding of tRNA to the ribosomes. The sequence is that of Small ribosomal subunit protein uS10 from Caldicellulosiruptor bescii (strain ATCC BAA-1888 / DSM 6725 / KCTC 15123 / Z-1320) (Anaerocellum thermophilum).